The chain runs to 618 residues: UvrABC system protein C (618 aa).

Residues 13–92 enclose the GIY-YIG domain; the sequence is DKPGVYLMKN…IKKYRPKYNI (80 aa). The region spanning 204 to 239 is the UVR domain; that stretch reads LDIVENFKLNMERAAENLEFEKAAMLRDKINIIEKI.

This sequence belongs to the UvrC family. As to quaternary structure, interacts with UvrB in an incision complex.

It localises to the cytoplasm. In terms of biological role, the UvrABC repair system catalyzes the recognition and processing of DNA lesions. UvrC both incises the 5' and 3' sides of the lesion. The N-terminal half is responsible for the 3' incision and the C-terminal half is responsible for the 5' incision. This is UvrABC system protein C from Clostridium botulinum (strain Langeland / NCTC 10281 / Type F).